We begin with the raw amino-acid sequence, 526 residues long: Protein spinster homolog 1 (526 aa).

The disordered stretch occupies residues 1 to 44 (MTSRRSHGDVTPFLTQADNTEEEGVRDPESQSSDEEEEEGKDHG). The next 12 helical transmembrane spans lie at 59 to 79 (VIIV…RFTV), 98 to 118 (GLVQ…FGYL), 126 to 146 (LIMC…SFVS), 159 to 179 (LVGV…ADLF), 187 to 207 (MLSF…IVGS), 218 to 238 (WALR…IFVA), 272 to 292 (FILS…LALW), 321 to 341 (MIFG…GVEI), 355 to 375 (LVCA…LAFA), 384 to 404 (VFIF…ADIL), 419 to 439 (LQIV…IGVI), and 463 to 483 (MICA…ALFI).

This sequence belongs to the major facilitator superfamily. Spinster (TC 2.A.1.49) family.

It localises to the lysosome membrane. It carries out the reaction a 1-acyl-sn-glycero-3-phosphocholine(out) + H(+)(out) = a 1-acyl-sn-glycero-3-phosphocholine(in) + H(+)(in). It catalyses the reaction a 1-acyl-sn-glycero-3-phosphoethanolamine(out) + H(+)(out) = a 1-acyl-sn-glycero-3-phosphoethanolamine(in) + H(+)(in). The enzyme catalyses a 1-O-(1Z-alkenyl)-sn-glycero-3-phosphocholine(out) + H(+)(out) = a 1-O-(1Z-alkenyl)-sn-glycero-3-phosphocholine(in) + H(+)(in). The catalysed reaction is a 1-O-(1Z-alkenyl)-sn-glycero-3-phosphoethanolamine(out) + H(+)(out) = a 1-O-(1Z-alkenyl)-sn-glycero-3-phosphoethanolamine(in) + H(+)(in). Its function is as follows. Mediates the rate-limiting, proton-dependent, lysosomal efflux of lysophospholipids. Selective for zwitterionic headgroups such as lysophosphatidylcholine (LPC) and lysophosphatidylethanolamine (LPE). Essential player in lysosomal homeostasis. The protein is Protein spinster homolog 1 (spns1) of Xenopus laevis (African clawed frog).